Reading from the N-terminus, the 294-residue chain is Elongation factor Ts (294 aa).

The tract at residues Thr80–Val83 is involved in Mg(2+) ion dislocation from EF-Tu.

The protein belongs to the EF-Ts family.

Its subcellular location is the cytoplasm. Functionally, associates with the EF-Tu.GDP complex and induces the exchange of GDP to GTP. It remains bound to the aminoacyl-tRNA.EF-Tu.GTP complex up to the GTP hydrolysis stage on the ribosome. The protein is Elongation factor Ts of Listeria monocytogenes serovar 1/2a (strain ATCC BAA-679 / EGD-e).